The chain runs to 264 residues: Carbonic anhydrase (264 aa).

The tat-type signal signal peptide spans 1–33; sequence MSSTLYRRQLLKLLGMSVLGTSFSSCVTSPARA. Positions 36 to 264 constitute an Alpha-carbonic anhydrase domain; sequence VNWGYIGKVG…LNDRLVIEAI (229 aa). H127, H129, and H146 together coordinate Zn(2+). A substrate-binding site is contributed by 214-215; sequence TT.

Belongs to the alpha-carbonic anhydrase family. It depends on Zn(2+) as a cofactor. Predicted to be exported by the Tat system. The position of the signal peptide cleavage has not been experimentally proven.

It catalyses the reaction hydrogencarbonate + H(+) = CO2 + H2O. Functionally, reversible hydration of carbon dioxide. The chain is Carbonic anhydrase (ecaA) from Nostoc sp. (strain PCC 7120 / SAG 25.82 / UTEX 2576).